A 192-amino-acid chain; its full sequence is Putative 3-methyladenine DNA glycosylase (192 aa).

This sequence belongs to the DNA glycosylase MPG family.

This Methanoculleus marisnigri (strain ATCC 35101 / DSM 1498 / JR1) protein is Putative 3-methyladenine DNA glycosylase.